The primary structure comprises 216 residues: RNA pyrophosphohydrolase (216 aa).

Positions Gly6–Thr149 constitute a Nudix hydrolase domain. The Nudix box signature appears at Gly38–Gly59.

This sequence belongs to the Nudix hydrolase family. RppH subfamily. Requires a divalent metal cation as cofactor.

Its function is as follows. Accelerates the degradation of transcripts by removing pyrophosphate from the 5'-end of triphosphorylated RNA, leading to a more labile monophosphorylated state that can stimulate subsequent ribonuclease cleavage. The chain is RNA pyrophosphohydrolase from Burkholderia ambifaria (strain MC40-6).